A 1357-amino-acid chain; its full sequence is DNA-directed RNA polymerase subunit beta (1357 aa).

The protein belongs to the RNA polymerase beta chain family. In terms of assembly, the RNAP catalytic core consists of 2 alpha, 1 beta, 1 beta' and 1 omega subunit. When a sigma factor is associated with the core the holoenzyme is formed, which can initiate transcription.

It carries out the reaction RNA(n) + a ribonucleoside 5'-triphosphate = RNA(n+1) + diphosphate. Its function is as follows. DNA-dependent RNA polymerase catalyzes the transcription of DNA into RNA using the four ribonucleoside triphosphates as substrates. The polypeptide is DNA-directed RNA polymerase subunit beta (Pseudomonas paraeruginosa (strain DSM 24068 / PA7) (Pseudomonas aeruginosa (strain PA7))).